A 294-amino-acid polypeptide reads, in one-letter code: ATP synthase gamma chain (294 aa).

Belongs to the ATPase gamma chain family. F-type ATPases have 2 components, CF(1) - the catalytic core - and CF(0) - the membrane proton channel. CF(1) has five subunits: alpha(3), beta(3), gamma(1), delta(1), epsilon(1). CF(0) has three main subunits: a, b and c.

The protein resides in the cell membrane. Produces ATP from ADP in the presence of a proton gradient across the membrane. The gamma chain is believed to be important in regulating ATPase activity and the flow of protons through the CF(0) complex. This chain is ATP synthase gamma chain, found in Ruminiclostridium cellulolyticum (strain ATCC 35319 / DSM 5812 / JCM 6584 / H10) (Clostridium cellulolyticum).